An 865-amino-acid polypeptide reads, in one-letter code: Protein translocase subunit SecA (865 aa).

ATP-binding positions include Q93, G111 to T115, and D501. Positions 841, 843, 852, and 853 each coordinate Zn(2+).

The protein belongs to the SecA family. In terms of assembly, monomer and homodimer. Part of the essential Sec protein translocation apparatus which comprises SecA, SecYEG and auxiliary proteins SecDF-YajC and YidC. Requires Zn(2+) as cofactor.

Its subcellular location is the cell inner membrane. The protein resides in the cytoplasm. The catalysed reaction is ATP + H2O + cellular proteinSide 1 = ADP + phosphate + cellular proteinSide 2.. In terms of biological role, part of the Sec protein translocase complex. Interacts with the SecYEG preprotein conducting channel. Has a central role in coupling the hydrolysis of ATP to the transfer of proteins into and across the cell membrane, serving as an ATP-driven molecular motor driving the stepwise translocation of polypeptide chains across the membrane. In Helicobacter pylori (strain HPAG1), this protein is Protein translocase subunit SecA.